We begin with the raw amino-acid sequence, 402 residues long: Phosphoglycerate kinase (402 aa).

Substrate contacts are provided by residues 21–23 (DFN), Arg36, 59–62 (HLGR), Arg119, and Arg154. ATP contacts are provided by residues Lys207, Gly298, Glu329, and 356–359 (GGDA).

The protein belongs to the phosphoglycerate kinase family. Monomer.

It is found in the cytoplasm. The catalysed reaction is (2R)-3-phosphoglycerate + ATP = (2R)-3-phospho-glyceroyl phosphate + ADP. It functions in the pathway carbohydrate degradation; glycolysis; pyruvate from D-glyceraldehyde 3-phosphate: step 2/5. The sequence is that of Phosphoglycerate kinase (pgk) from Chlamydia pneumoniae (Chlamydophila pneumoniae).